A 395-amino-acid polypeptide reads, in one-letter code: Putative pyridoxal phosphate-dependent acyltransferase (395 aa).

A pyridoxal 5'-phosphate-binding site is contributed by 110–111 (GF). His-135 contacts substrate. Pyridoxal 5'-phosphate-binding positions include Ser-185, 210-213 (DDAH), and 240-243 (TLSK). Lys-243 bears the N6-(pyridoxal phosphate)lysine mark. Thr-357 contacts substrate.

It belongs to the class-II pyridoxal-phosphate-dependent aminotransferase family. In terms of assembly, homodimer. Pyridoxal 5'-phosphate is required as a cofactor.

This is Putative pyridoxal phosphate-dependent acyltransferase from Staphylococcus aureus (strain MRSA252).